We begin with the raw amino-acid sequence, 407 residues long: Transcriptional regulator ICP22 homolog (407 aa).

Residues 34–268 (RKRRRKLKPQ…STQPGGVPKL (235 aa)) form a disordered region. Over residues 81–241 (EREGEGGEEG…EEAEEEEEEA (161 aa)) the composition is skewed to acidic residues.

The protein belongs to the herpesviridae ICP22 family.

The chain is Transcriptional regulator ICP22 homolog (73) from Saimiriine herpesvirus 2 (strain 11) (SaHV-2).